The chain runs to 452 residues: ADP-dependent glucose/glucosamine kinase (452 aa).

Residues 1-452 (MSWDEMYRDA…AFVSEFSLSS (452 aa)) form the ADPK domain. Residues aspartate 33, glutamate 87, 111–112 (GQ), and histidine 174 contribute to the D-glucose site. Glutamate 264 contributes to the Mg(2+) binding site. Asparagine 290 is an ADP binding site. Glutamate 293 is a Mg(2+) binding site. ADP contacts are provided by residues 339–340 (HT), valine 426, and glycine 436. Aspartate 437 is a binding site for D-glucose. Aspartate 437 provides a ligand contact to Mg(2+). Aspartate 437 acts as the Proton acceptor in catalysis.

It belongs to the ADP-dependent glucokinase family. Mg(2+) is required as a cofactor.

It localises to the cytoplasm. It carries out the reaction D-glucose + ADP = D-glucose 6-phosphate + AMP + H(+). The enzyme catalyses D-glucosamine + ADP = D-glucosamine 6-phosphate + AMP + H(+). Its pathway is carbohydrate degradation; glycolysis. In terms of biological role, catalyzes the ADP-dependent phosphorylation of D-glucose to D-glucose 6-phosphate and glucosamine to glucosamine 6-phosphate. The sequence is that of ADP-dependent glucose/glucosamine kinase from Pyrococcus abyssi (strain GE5 / Orsay).